The chain runs to 225 residues: NAD(P)H-quinone oxidoreductase subunit K, chloroplastic (225 aa).

[4Fe-4S] cluster is bound by residues Cys-43, Cys-44, Cys-108, and Cys-139.

Belongs to the complex I 20 kDa subunit family. As to quaternary structure, NDH is composed of at least 16 different subunits, 5 of which are encoded in the nucleus. [4Fe-4S] cluster serves as cofactor.

The protein localises to the plastid. The protein resides in the chloroplast thylakoid membrane. It catalyses the reaction a plastoquinone + NADH + (n+1) H(+)(in) = a plastoquinol + NAD(+) + n H(+)(out). The enzyme catalyses a plastoquinone + NADPH + (n+1) H(+)(in) = a plastoquinol + NADP(+) + n H(+)(out). Its function is as follows. NDH shuttles electrons from NAD(P)H:plastoquinone, via FMN and iron-sulfur (Fe-S) centers, to quinones in the photosynthetic chain and possibly in a chloroplast respiratory chain. The immediate electron acceptor for the enzyme in this species is believed to be plastoquinone. Couples the redox reaction to proton translocation, and thus conserves the redox energy in a proton gradient. In Helianthus annuus (Common sunflower), this protein is NAD(P)H-quinone oxidoreductase subunit K, chloroplastic.